We begin with the raw amino-acid sequence, 327 residues long: Complex I intermediate-associated protein 30, mitochondrial (327 aa).

The transit peptide at 1–24 (MALVHKLLRGTYFLRKFXKPTSAL) directs the protein to the mitochondrion. Positions 42–63 (PVASPGKASSQRKTEGDLQGDH) are disordered. Positions 53-63 (RKTEGDLQGDH) are enriched in basic and acidic residues. At serine 318 the chain carries Phosphoserine.

It belongs to the CIA30 family. As to quaternary structure, part of the mitochondrial complex I assembly/MCIA complex that comprises at least the core subunits TMEM126B, NDUFAF1, ECSIT and ACAD9 and complement subunits such as COA1 and TMEM186. Interacts with ECSIT. Interacts with ACAD9. At early stages of complex I assembly, it is found in intermediate subcomplexes that contain different subunits including NDUFB6, NDUFA6, NDUFA9, NDUFS3, NDUFS7, ND1, ND2 and ND3. Interacts with TMEM70 and TMEM242.

The protein resides in the mitochondrion. It localises to the mitochondrion matrix. As part of the MCIA complex, involved in the assembly of the mitochondrial complex I. This Pan troglodytes (Chimpanzee) protein is Complex I intermediate-associated protein 30, mitochondrial.